A 132-amino-acid chain; its full sequence is Profilin-1 (132 aa).

The protein belongs to the profilin family. As to quaternary structure, occurs in many kinds of cells as a complex with monomeric actin in a 1:1 ratio. As to expression, expressed in the nerve ring during late embryonic stages. In adults, expression is seen in the neurons, vulva and somatic gonad.

The protein resides in the cytoplasm. It is found in the cytoskeleton. Functionally, binds to actin and affects the structure of the cytoskeleton. At high concentrations, profilin prevents the polymerization of actin, whereas it enhances it at low concentrations. By binding to PIP2, it inhibits the formation of IP3 and DG. Also binds to poly(L-proline) and phosphatidylinositol 4,5-bisphosphate micelles. The sequence is that of Profilin-1 (pfn-1) from Caenorhabditis elegans.